The chain runs to 93 residues: Alpha-defensin 26 (93 aa).

Positions 1–19 (MKTLVLLSALFLLAFQVQA) are cleaved as a signal peptide. The propeptide occupies 20-58 (DPIQNTDEETNTEVQPQEEDQAVSVSFGNPEGSDLQEES). Residues 24 to 55 (NTDEETNTEVQPQEEDQAVSVSFGNPEGSDLQ) are disordered. Positions 25-40 (TDEETNTEVQPQEEDQ) are enriched in acidic residues. 3 disulfides stabilise this stretch: C64–C92, C66–C81, and C71–C91.

The protein belongs to the alpha-defensin family.

It localises to the secreted. In terms of biological role, may have microbicidal activities. The chain is Alpha-defensin 26 (Defa26) from Mus musculus (Mouse).